Reading from the N-terminus, the 158-residue chain is uncharacterized protein (158 aa).

This is an uncharacterized protein from Aedes vexans (Inland floodwater mosquito).